The sequence spans 283 residues: NAD kinase (283 aa).

Residue Asp-69 is the Proton acceptor of the active site. Residues 69-70 (DG), 138-139 (NE), Lys-166, Asp-168, Leu-176, 179-184 (TAYNLS), and Gln-235 each bind NAD(+).

The protein belongs to the NAD kinase family. A divalent metal cation serves as cofactor.

Its subcellular location is the cytoplasm. The enzyme catalyses NAD(+) + ATP = ADP + NADP(+) + H(+). Functionally, involved in the regulation of the intracellular balance of NAD and NADP, and is a key enzyme in the biosynthesis of NADP. Catalyzes specifically the phosphorylation on 2'-hydroxyl of the adenosine moiety of NAD to yield NADP. The protein is NAD kinase of Helicobacter acinonychis (strain Sheeba).